Consider the following 179-residue polypeptide: 5'-deoxynucleotidase VV1_0013 (179 aa).

Histidine 53 serves as a coordination point for a divalent metal cation. Residues 62–65 and aspartate 122 each bind substrate; that span reads DLPT. Aspartate 122 is a binding site for a divalent metal cation.

It belongs to the 5DNU family. As to quaternary structure, homodimer. Requires a divalent metal cation as cofactor.

Its subcellular location is the cytoplasm. The enzyme catalyses a 2'-deoxyribonucleoside 5'-phosphate + H2O = a 2'-deoxyribonucleoside + phosphate. Catalyzes the strictly specific dephosphorylation of 2'-deoxyribonucleoside 5'-monophosphates. In Vibrio vulnificus (strain CMCP6), this protein is 5'-deoxynucleotidase VV1_0013.